We begin with the raw amino-acid sequence, 162 residues long: Flagellar assembly factor FliW (162 aa).

This sequence belongs to the FliW family. Interacts with translational regulator CsrA and flagellin(s).

Its subcellular location is the cytoplasm. Acts as an anti-CsrA protein, binds CsrA and prevents it from repressing translation of its target genes, one of which is flagellin. Binds to flagellin and participates in the assembly of the flagellum. The sequence is that of Flagellar assembly factor FliW from Alkaliphilus metalliredigens (strain QYMF).